Reading from the N-terminus, the 308-residue chain is Methionyl-tRNA formyltransferase (308 aa).

110-113 (SLLP) lines the (6S)-5,6,7,8-tetrahydrofolate pocket.

Belongs to the Fmt family.

It carries out the reaction L-methionyl-tRNA(fMet) + (6R)-10-formyltetrahydrofolate = N-formyl-L-methionyl-tRNA(fMet) + (6S)-5,6,7,8-tetrahydrofolate + H(+). Attaches a formyl group to the free amino group of methionyl-tRNA(fMet). The formyl group appears to play a dual role in the initiator identity of N-formylmethionyl-tRNA by promoting its recognition by IF2 and preventing the misappropriation of this tRNA by the elongation apparatus. In Neisseria gonorrhoeae (strain ATCC 700825 / FA 1090), this protein is Methionyl-tRNA formyltransferase.